The chain runs to 121 residues: UPF0102 protein XF_0554 (121 aa).

This sequence belongs to the UPF0102 family.

The polypeptide is UPF0102 protein XF_0554 (Xylella fastidiosa (strain 9a5c)).